Reading from the N-terminus, the 673-residue chain is Methionine--tRNA ligase (673 aa).

Residues 13–23 (PYTNGFCHLGH) carry the 'HIGH' region motif. C144, C147, C156, and C160 together coordinate Zn(2+). The 'KMSKS' region motif lies at 325-329 (KFSKS). K328 contacts ATP. Residues 575–673 (DVAKLDLRVG…KDVPEGTKVH (99 aa)) form the tRNA-binding domain.

The protein belongs to the class-I aminoacyl-tRNA synthetase family. MetG type 1 subfamily. As to quaternary structure, homodimer. Zn(2+) is required as a cofactor.

Its subcellular location is the cytoplasm. The catalysed reaction is tRNA(Met) + L-methionine + ATP = L-methionyl-tRNA(Met) + AMP + diphosphate. Functionally, is required not only for elongation of protein synthesis but also for the initiation of all mRNA translation through initiator tRNA(fMet) aminoacylation. This chain is Methionine--tRNA ligase, found in Methanocorpusculum labreanum (strain ATCC 43576 / DSM 4855 / Z).